A 312-amino-acid polypeptide reads, in one-letter code: 2,3-dihydroxyphenylpropionate/2,3-dihydroxicinnamic acid 1,2-dioxygenase (312 aa).

His-115 functions as the Proton donor in the catalytic mechanism. The active-site Proton acceptor is the His-179.

The protein belongs to the LigB/MhpB extradiol dioxygenase family. Homotetramer. Fe(2+) is required as a cofactor.

It catalyses the reaction 3-(2,3-dihydroxyphenyl)propanoate + O2 = (2Z,4E)-2-hydroxy-6-oxonona-2,4-dienedioate + H(+). The enzyme catalyses (2E)-3-(2,3-dihydroxyphenyl)prop-2-enoate + O2 = (2Z,4E,7E)-2-hydroxy-6-oxonona-2,4,7-trienedioate + H(+). The protein operates within aromatic compound metabolism; 3-phenylpropanoate degradation. In terms of biological role, catalyzes the non-heme iron(II)-dependent oxidative cleavage of 2,3-dihydroxyphenylpropionic acid and 2,3-dihydroxicinnamic acid into 2-hydroxy-6-ketononadienedioate and 2-hydroxy-6-ketononatrienedioate, respectively. The chain is 2,3-dihydroxyphenylpropionate/2,3-dihydroxicinnamic acid 1,2-dioxygenase from Mycolicibacterium paratuberculosis (strain ATCC BAA-968 / K-10) (Mycobacterium paratuberculosis).